A 445-amino-acid chain; its full sequence is Phospho-alpha-glucosidase PagL (445 aa).

4 to 71 (YSICIVGGGS…ELEEVIWTTD (68 aa)) provides a ligand contact to NAD(+). Substrate contacts are provided by arginine 94 and asparagine 148. Cysteine 171 contacts Mn(2+). The Proton donor role is filled by aspartate 172. Histidine 201 serves as a coordination point for Mn(2+). Catalysis depends on tyrosine 264, which acts as the Proton acceptor. Arginine 284 lines the substrate pocket.

It belongs to the glycosyl hydrolase 4 family. In terms of assembly, homotetramer. The cofactor is NAD(+). Mn(2+) serves as cofactor.

Functionally, phospho-alpha-glucosidase that catalyzes the hydrolysis of p-nitrophenyl-alpha-D-glucopyranoside 6-phosphate, but is not able to cleave 'natural' phospho-alpha-glucosides produced via the phosphoenolpyruvate-dependent sugar phosphotransferase system (PEP-PTS). This Clostridium acetobutylicum (strain ATCC 824 / DSM 792 / JCM 1419 / IAM 19013 / LMG 5710 / NBRC 13948 / NRRL B-527 / VKM B-1787 / 2291 / W) protein is Phospho-alpha-glucosidase PagL (pagL).